The chain runs to 2339 residues: Inverse autotransporter adhesin YeeJ (2339 aa).

The signal sequence occupies residues 1-26; it reads MGIKLRRLTAGICLITQLAFPMAAAA. The 49-residue stretch at 50 to 98 folds into the LysM domain; it reads VPYTLGALESAQSVAERFGISVAELRKLNQFRTFARGFDNVRQGDELDV. Residues 125-400 are inverse autotransporter; sequence TSQQIGSLLA…SRYDLVDRNN (276 aa). Residues 513 to 605 are invasin 3 domain; that stretch reads QKDSSVSLST…GVDAAKAPAV (93 aa). Big-1 domains are found at residues 721–815, 822–913, 920–1017, 1024–1121, 1128–1221, 1229–1331, 1339–1432, 1439–1535, 1542–1639, 1646–1730, 1746–1837, 1840–1934, and 1942–2034; these read IATL…VSFV, QVDL…VNFI, ALTL…MTFV, VVVL…VTFV, QVVL…VHFI, IIEL…SINV, HLTL…VTYV, EITL…VNFI, QVNL…VTLI, KLAS…PTEV, ITSL…LEAI, KLTL…VKVT, and VASF…ITLV. Residues 2236–2339 form a C-type lectin domain region; that stretch reads KSWWVNAGEA…FAYATCYKNL (104 aa).

The protein belongs to the intimin/invasin family.

It is found in the cell outer membrane. A cryptic inverse autotransporter, it is not expressed in wild-type strain MG1655. Upon overexpression shows increased adherence to polyvinyl chloride (PVC) plates and increased mature biofilm formation. Probably binds peptidoglycan. This Escherichia coli (strain K12) protein is Inverse autotransporter adhesin YeeJ (yeeJ).